The sequence spans 946 residues: MNEFLPDSCLLGVMLAVSSHSGPQVIYHYPPSNRILETARDAHMNQQLGTTGLKRETEGRSMKSRGHPGNWDMNSELDSDLHSSKMERTASSSSSSSLSSPSSGLSDSELSTDYADWSTSGSSSDSELDLQTPDDSRRSQLENAGARSTRNVSPVSMSRNTSLGREPKDNGQKISASKLLDILNDPKSQFTKINTNDTNDDQFNMEEDDDLIEFDYMTSEKRVDITEEFFTEANYQDTSKFFEFDIDFLAELCCPSREMCNTRFELTVDEYCFLGHPIHVDSSGNWRKSRKRNNSLSKSKRSGSLTGSRKRSGSKSSNHDKSFSAETPNSPESSKIIEEVGSLHKSRTLSNPQNDHFTKDMTMFHVCFIMDPNLIEYNKRVDDMYQYVVARLSVLLRYLQSKNDYVSEQCELILKEKEKVFKNSKHYKSLSLPSEKGRYLYQRLLAKSSLARALTECVEKIKKNEIACLEITDHRTVSLQIPIQNEFSILPQYKLYPVLKGSFLTSIQNNKFLEKSANIDDNHHAKSARDTNLISDHVNTFSNGQTKNEIFYSKNMENALTAQNDYDDDDLLLYSILLLDDPDKIIADLDNYSSNDDIGGVILKQLVKVIQPNVPLLSYQYIINELLAEKPLSSSTTANKSKQNKDNKTNTFYSALLRSCALHLIYWRHARAILPISFKNTYIVSPLSPVEADNSEMIKGNRKPSITDLNVTSNSSSKIPVIYLNQQSFKLKFPSLPSLPTFLNILSLGKPKAFGNIIPSKEHKPIYMAALIWLIQKGYLTQLLTFVYIRVDKKIKMKVDEDLEKEGFRTNRRRRQEDNVDNKLLSTDENANEPPKSTKVDINDNTLEGRDTEYDSDSFDYDDPEFNHDYTIILEPERATALEKRWIYKCIQDQPQDIKILFNKVMKYMNGRTAMETVMLKEHISRHDIKRLLTSLGNYIVELNHW.

Residues Met1 to Ser21 form the signal peptide. Disordered regions lie at residues Leu48 to Gly171, Ser283 to Ser334, and Arg813 to Gly849. Residues Ser79–Arg88 show a composition bias toward basic and acidic residues. Low complexity predominate over residues Ser91–Asp125. Over residues Ala146 to Leu163 the composition is skewed to polar residues. A compositionally biased stretch (basic residues) spans Arg287–Arg301. The span at Ser324–Ser333 shows a compositional bias: polar residues. Residues Lys836–Gly849 show a composition bias toward basic and acidic residues.

This sequence belongs to the NPR3 family.

Mediates inactivation of the TORC1 complex in response to amino acid starvation. Required for meiotic nuclear division. The polypeptide is Nitrogen permease regulator 3 (NPR3) (Candida glabrata (strain ATCC 2001 / BCRC 20586 / JCM 3761 / NBRC 0622 / NRRL Y-65 / CBS 138) (Yeast)).